Consider the following 291-residue polypeptide: MAVVTMKQLLESGVHFGHQTKRWNPKMKRYIFTERNGIYIIDLQQTLSYIDRAYDFVKETVAHGGTVLFIGTKKQAQEAIEEQAARVGMPYVKERWLGGMLTNFSTVYKRLQRLKELEEIEVTGGTEVRTKKEQLVLTREKAKLERTLGGIRDMSRVPSAVWVVDTKKEHIAVGEARKLGIPVVAILDTNCDPDEVDYPIPGNDDAIRSAALLTRVVADAVADGLMARAGASKAADAKPEQSAGEEPLAEWEQALLRGEGTAPAASEEQPAEEPAPAAAEAQTDAAVGTAV.

The disordered stretch occupies residues 256–291 (LRGEGTAPAASEEQPAEEPAPAAAEAQTDAAVGTAV). Positions 261 to 291 (TAPAASEEQPAEEPAPAAAEAQTDAAVGTAV) are enriched in low complexity.

The protein belongs to the universal ribosomal protein uS2 family.

This is Small ribosomal subunit protein uS2 from Frankia alni (strain DSM 45986 / CECT 9034 / ACN14a).